A 586-amino-acid polypeptide reads, in one-letter code: Succinate dehydrogenase flavoprotein subunit (586 aa).

FAD contacts are provided by residues 10 to 15 (GGGLAG) and 33 to 48 (SIVP…AQGG). Tele-8alpha-FAD histidine is present on histidine 41. Histidine 236 and serine 250 together coordinate substrate. Arginine 285 functions as the Proton acceptor in the catalytic mechanism. Histidine 352 is a binding site for substrate. An FAD-binding site is contributed by glutamate 376. A substrate-binding site is contributed by arginine 386. 391–392 (SL) provides a ligand contact to FAD.

The protein belongs to the FAD-dependent oxidoreductase 2 family. FRD/SDH subfamily. As to quaternary structure, in B.subtilis succinate dehydrogenase forms part of an enzyme complex containing three subunits: a flavoprotein, an iron-sulfur protein and cytochrome b-558. Interacts with FloT. FAD serves as cofactor.

The protein localises to the cell membrane. It is found in the membrane raft. It carries out the reaction a quinone + succinate = fumarate + a quinol. It functions in the pathway carbohydrate metabolism; tricarboxylic acid cycle; fumarate from succinate (bacterial route): step 1/1. The chain is Succinate dehydrogenase flavoprotein subunit (sdhA) from Bacillus subtilis (strain 168).